The primary structure comprises 377 residues: Homocitrate synthase 1 (377 aa).

The Pyruvate carboxyltransferase domain maps to 4–255 (VLINDTTLRD…DMGIDTPRLL (252 aa)).

Belongs to the alpha-IPM synthase/homocitrate synthase family.

It catalyses the reaction acetyl-CoA + 2-oxoglutarate + H2O = (2R)-homocitrate + CoA + H(+). Its function is as follows. This protein is a Fe-Mo-cofactor biosynthetic component. The polypeptide is Homocitrate synthase 1 (nifV1) (Nostoc sp. (strain PCC 7120 / SAG 25.82 / UTEX 2576)).